The sequence spans 45 residues: Large ribosomal subunit protein bL34c (45 aa).

The segment at 1–21 is disordered; sequence MIQRTLTGTNRKKTKRSGFRS. Basic residues predominate over residues 10 to 19; the sequence is NRKKTKRSGF.

The protein belongs to the bacterial ribosomal protein bL34 family.

Its subcellular location is the plastid. It localises to the chloroplast. In Cyanidium caldarium (Red alga), this protein is Large ribosomal subunit protein bL34c (rpl34).